Here is a 194-residue protein sequence, read N- to C-terminus: Large ribosomal subunit protein uL6x (194 aa).

Residue T75 is modified to Phosphothreonine.

Belongs to the universal ribosomal protein uL6 family.

This Arabidopsis thaliana (Mouse-ear cress) protein is Large ribosomal subunit protein uL6x (RPL9D).